The sequence spans 384 residues: Urea transporter 1 (384 aa).

The interval 1–23 (MDDNPTAVKLDQGGNQAPQGQGR) is disordered. 5 helical membrane-spanning segments follow: residues 61–81 (ISQVVFVSNPISGILILVGLL), 85–105 (PWCALNGCVGTVVSTLTALLL), 111–131 (AITAGLQGYNATLVGILMAIY), 138–158 (FWWLLFPVSAMSMTCPIFSSA), and 169–189 (PVFTLPFNMALSMYLSATGHF). N206 carries an N-linked (GlcNAc...) asparagine glycan. 3 helical membrane-spanning segments follow: residues 237–257 (GGIFLGAILLSSPLMCLHAAI), 279–299 (GLWGFNSSLACIAIGGMFMAL), and 327–347 (VVGLPSCTWPFCLATLLFLLL).

Belongs to the urea transporter family. In terms of assembly, homotrimer; each subunit contains a pore through which urea permeates. Identified in a complex with STOM.

It is found in the cell membrane. The protein localises to the basolateral cell membrane. The enzyme catalyses urea(in) = urea(out). In terms of biological role, mediates the transport of urea driven by a concentration gradient across the cell membranes of erythrocytes and the renal inner medullary collecting duct which is critical to the urinary concentrating mechanism. Facilitates water transport in erythrocytes. This Ovis aries (Sheep) protein is Urea transporter 1 (SLC14A1).